Here is a 1157-residue protein sequence, read N- to C-terminus: Probable inactive leucine-rich repeat receptor kinase XIAO (1157 aa).

The signal sequence occupies residues 1–21 (MPPPPRLLFLLVMLLVVAAPG). A glycan (N-linked (GlcNAc...) asparagine) is linked at N58. 26 LRR repeats span residues 101-125 (LVYL…LSRI), 127-149 (SLRA…FLAN), 150-172 (LTNL…VSFP), 173-196 (PSLK…VSAS), 198-220 (TSLQ…SLGT), 221-245 (LQDL…LSNC), 247-269 (ALLH…VAAI), 270-293 (PSLQ…AFGG), 296-319 (NSSL…VSLG), 320-343 (KDLQ…LAGA), 344-367 (GGLT…VGQL), 368-391 (TALQ…IGRC), 393-414 (ALQV…ALGG), 415-439 (LRRL…LGNL), 440-463 (SWLE…LFVL), 464-487 (GNLT…IGNL), 489-511 (ALQS…IGNL), 513-536 (NLRV…LFGL), 537-559 (PQLQ…GFSS), 561-583 (WSLR…TYGY), 584-608 (LPSL…LANC), 609-631 (SNLT…DFAR), 632-656 (LGEL…ISNC), 658-680 (SLVT…LSNL), 681-704 (SKLQ…LAQI), and 706-728 (GMLS…LGSR). N-linked (GlcNAc...) asparagine glycosylation is present at N149. N-linked (GlcNAc...) asparagine glycosylation is found at N192, N204, and N244. A glycan (N-linked (GlcNAc...) asparagine) is linked at N296. N-linked (GlcNAc...) asparagine glycosylation occurs at N438. N465, N494, and N524 each carry an N-linked (GlcNAc...) asparagine glycan. N567, N607, N610, N655, N679, N692, and N711 each carry an N-linked (GlcNAc...) asparagine glycan. The chain crosses the membrane as a helical span at residues 765-785 (LALLIGVVAATVLLLVLFCCC). The segment at 804-825 (VKKRRRSPGRGSGSSGTSTDSV) is disordered. The 296-residue stretch at 849 to 1144 (FDEENVLSRG…LEGCRVGPDI (296 aa)) folds into the Protein kinase domain. Residues 855–863 (LSRGRHGLV), 930–932 (DYM), 936–939 (NLAT), 980–985 (DVKPQN), and D998 contribute to the ATP site.

It belongs to the protein kinase superfamily. Ser/Thr protein kinase family. Expressed in developing culm, coleoptile, primary root, young spikelet, young leaf blade and leaf sheath, floral meristem primordia, stamen primordia, and lemma and palea primordia.

Its subcellular location is the cell membrane. Functionally, functions in the early stages of organ development by regulating cell division rate. Is probably involved in the regulation of a number of cell-cycle genes. May act as regulator of brassinosteroid (BR) signaling and cell-cycle controlling organ growth. The protein is Probable inactive leucine-rich repeat receptor kinase XIAO of Oryza sativa subsp. japonica (Rice).